Here is a 432-residue protein sequence, read N- to C-terminus: MDHSMSKKLHDEALLHIVGGVNSPSRSNKGVGGGIPVTMERANGAYFYDVDGNKYIDYLAAFGPIITGHAHPHITEAITKAAQNGVLYGTPTKHEITFAKMLKEAIPSLEKVRFTNSGTEAVMTTIRVARAYTGRDKIIKFAGCYHGHFDLVLVEAGSGPSTLGIPDSAGVTRSTAEEVITVPFNDLTSFKEALAVWGDQVAAVLVEPIVGNFGMVAPAEGFLEAVNELAHENGSLVIYDEVITAFRFMYGGAQNYLGVIPDLTAMGKIIGGGLPIGAYGGRVDIMEKVAPLGPAYQAGTHAGNPASILSGIACLEVLQEEGLYDRFEKYGSMLKEGIEKAAIKHGIAVTVNQIVGALTVYFTDEPVTNYAEAGATNGDLFGRFFKGMLEEGINLAPSKYEAWFITSAHSEADILETIQAVDTVFGKLVQGK.

An N6-(pyridoxal phosphate)lysine modification is found at Lys268.

Belongs to the class-III pyridoxal-phosphate-dependent aminotransferase family. HemL subfamily. In terms of assembly, homodimer. The cofactor is pyridoxal 5'-phosphate.

The protein localises to the cytoplasm. The catalysed reaction is (S)-4-amino-5-oxopentanoate = 5-aminolevulinate. Its pathway is porphyrin-containing compound metabolism; protoporphyrin-IX biosynthesis; 5-aminolevulinate from L-glutamyl-tRNA(Glu): step 2/2. This is Glutamate-1-semialdehyde 2,1-aminomutase 2 from Listeria innocua serovar 6a (strain ATCC BAA-680 / CLIP 11262).